The primary structure comprises 376 residues: Pregnancy-associated glycoprotein 2 (376 aa).

The signal sequence occupies residues 1–15 (MKWLVLLGLVALSEC). Asn-51 and Asn-71 each carry an N-linked (GlcNAc...) asparagine glycan. Residues 68-373 (YVGNITIGTP…DRKNRRIGLA (306 aa)) enclose the Peptidase A1 domain. Asp-86 is an active-site residue. The cysteines at positions 99 and 104 are disulfide-linked. N-linked (GlcNAc...) asparagine glycosylation is found at Asn-114, Asn-248, and Asn-252. The cysteines at positions 258 and 262 are disulfide-linked. Asp-267 is a catalytic residue. A disulfide bond links Cys-300 and Cys-333. An N-linked (GlcNAc...) asparagine glycan is attached at Asn-343.

Belongs to the peptidase A1 family. Post-translationally, N-Glycosylated; the glycans terminate in either N-acetyl-galactosamine (GalNAc) or N-acetyllactosamine. Terminal GalNAc on Asn-linked glycans is greatly reduced prior to parturition while lactosamine-type N-glycans remain unaltered. As to expression, trophoblast and placental tissue. Localized to both the mononucleate and binucleate cells of the trophectoderm.

It localises to the secreted. Its subcellular location is the extracellular space. In terms of biological role, PAG2 or a processed derivative of this molecule might represent a factor that binds the LH receptor. The protein is Pregnancy-associated glycoprotein 2 (PAG2) of Bos taurus (Bovine).